The primary structure comprises 227 residues: NAD(P)H-quinone oxidoreductase subunit K, chloroplastic (227 aa).

Residues Cys43, Cys44, Cys108, and Cys139 each contribute to the [4Fe-4S] cluster site.

It belongs to the complex I 20 kDa subunit family. NDH is composed of at least 16 different subunits, 5 of which are encoded in the nucleus. [4Fe-4S] cluster serves as cofactor.

It localises to the plastid. The protein localises to the chloroplast thylakoid membrane. The enzyme catalyses a plastoquinone + NADH + (n+1) H(+)(in) = a plastoquinol + NAD(+) + n H(+)(out). The catalysed reaction is a plastoquinone + NADPH + (n+1) H(+)(in) = a plastoquinol + NADP(+) + n H(+)(out). Its function is as follows. NDH shuttles electrons from NAD(P)H:plastoquinone, via FMN and iron-sulfur (Fe-S) centers, to quinones in the photosynthetic chain and possibly in a chloroplast respiratory chain. The immediate electron acceptor for the enzyme in this species is believed to be plastoquinone. Couples the redox reaction to proton translocation, and thus conserves the redox energy in a proton gradient. In Spinacia oleracea (Spinach), this protein is NAD(P)H-quinone oxidoreductase subunit K, chloroplastic.